Here is a 329-residue protein sequence, read N- to C-terminus: Cytosolic sulfotransferase 6 (329 aa).

3'-phosphoadenylyl sulfate is bound at residue 74–79 (KCGTTW). Catalysis depends on H140, which acts as the Proton acceptor. 3'-phosphoadenylyl sulfate is bound by residues R162, S170, and 295–297 (RKG).

The protein belongs to the sulfotransferase 1 family.

The protein localises to the cytoplasm. In terms of biological role, sulfotransferase that utilizes 3'-phospho-5'-adenylyl sulfate (PAPS) as sulfonate donor. The protein is Cytosolic sulfotransferase 6 (SOT6) of Arabidopsis thaliana (Mouse-ear cress).